We begin with the raw amino-acid sequence, 519 residues long: Cytochrome P450 52E1 (519 aa).

The next 2 membrane-spanning stretches (helical) occupy residues 10 to 30 and 44 to 64; these read ALGG…FYFI and VIVF…TAML. Cys-479 lines the heme pocket.

Belongs to the cytochrome P450 family. The cofactor is heme.

It is found in the membrane. In terms of biological role, together with an NADPH cytochrome P450 the enzyme system catalyzes the terminal hydroxylation as the first step in the assimilation of alkanes and fatty acids. The chain is Cytochrome P450 52E1 (CYP52E1) from Candida apicola (Yeast).